The primary structure comprises 278 residues: Secoisolariciresinol dehydrogenase (278 aa).

Residues 23–28 (GGAGGI), aspartate 47, valine 73, and asparagine 99 each bind NAD(+). Positions 104 and 164 each coordinate substrate. Catalysis depends on tyrosine 167, which acts as the Proton donor/acceptor. Positions 171 and 200 each coordinate NAD(+).

Belongs to the short-chain dehydrogenases/reductases (SDR) family. In terms of assembly, homotetramer. In terms of tissue distribution, mostly expressed in stems and rhizomes, and, to a lower extent, in leaves.

It carries out the reaction (-)-secoisolariciresinol + 2 NAD(+) = (-)-matairesinol + 2 NADH + 2 H(+). It functions in the pathway aromatic compound metabolism; phenylpropanoid biosynthesis. In terms of biological role, oxidoreductase involved in lignan biosynthesis. Also involved in the biosynthesis of etoposide, a chemotherapeutic compound of the topoisomerase inhibitor family. Catalyzes the stereospecific conversion of (-)-secoisolariciresinol to (-)-matairesinol via a lactol intermediate. This is Secoisolariciresinol dehydrogenase from Sinopodophyllum hexandrum (Himalayan may apple).